Consider the following 154-residue polypeptide: Large ribosomal subunit protein uL13 (154 aa).

Residues 129-154 form a disordered region; sequence SQHPHEAQQPEALDVGTLNRKNKRIA.

This sequence belongs to the universal ribosomal protein uL13 family. Part of the 50S ribosomal subunit.

Its function is as follows. This protein is one of the early assembly proteins of the 50S ribosomal subunit, although it is not seen to bind rRNA by itself. It is important during the early stages of 50S assembly. The protein is Large ribosomal subunit protein uL13 of Bartonella bacilliformis (strain ATCC 35685 / KC583 / Herrer 020/F12,63).